Reading from the N-terminus, the 547-residue chain is MAELTISSDEIRSAIENYTASYSPEASREEVGLVTDTSDGIAHVSGLPSAMANELLEFPGGILGVALNLDATEIGAVILGDYENIQEGQEVKRTGDVLSVPVGDAFLGRVINPLGQPIDGLGEIESNETRALELQAASVLERQPVEEPLQTGIKAIDAMTPIGRGQRQLVIGDRKTGKTAVCIDAILNQKANWETGDEKQQVRCIYVAIGQKGSTIAGVKAALEEQGAMEYTTIVAAPASDSAGFKWLAPYTGSAIGQHWMYQGKHVLVVFDDLTKQAEAYRAISLLLRRPPGREAYPGDVFYLHSRLLERSAKLSDALGGGSLTALPIIETKANDVSAYIPTNVISITDGQVFLESDLFNKGVRPAINVGISVSRVGGAAQTKGMKKVSGSLRLELAQFRELEAFSAFASDLDAASKAQLERGARLVELLKQDQYSPIPVEDQIVSIYLAGEGVFDSVPVGDVRRFEAELLDELHRTASGVYESIKGGKALDADNAKALVEATDKFKETFIASDGSRVVNEAEAEALDAGEVGHEQINVKRTTVSK.

Position 172–179 (172–179 (GDRKTGKT)) interacts with ATP.

It belongs to the ATPase alpha/beta chains family. F-type ATPases have 2 components, CF(1) - the catalytic core - and CF(0) - the membrane proton channel. CF(1) has five subunits: alpha(3), beta(3), gamma(1), delta(1), epsilon(1). CF(0) has three main subunits: a(1), b(2) and c(9-12). The alpha and beta chains form an alternating ring which encloses part of the gamma chain. CF(1) is attached to CF(0) by a central stalk formed by the gamma and epsilon chains, while a peripheral stalk is formed by the delta and b chains.

The protein resides in the cell membrane. It carries out the reaction ATP + H2O + 4 H(+)(in) = ADP + phosphate + 5 H(+)(out). Its function is as follows. Produces ATP from ADP in the presence of a proton gradient across the membrane. The alpha chain is a regulatory subunit. In Rhodococcus jostii (strain RHA1), this protein is ATP synthase subunit alpha.